We begin with the raw amino-acid sequence, 660 residues long: Junctophilin-1 (660 aa).

Topologically, residues 1 to 638 are cytoplasmic; sequence MTGGRFDFDD…EKEANSGPNS (638 aa). MORN repeat units lie at residues 14–36, 38–59, 60–82, 106–128, and 129–151; these read YCGG…KGQG, YSGS…SGNT, YQGY…KWMY, YEGT…DGGT, and YQGQ…PYGM. Phosphoserine is present on residues serine 157, serine 216, and serine 220. The segment at 228 to 247 is disordered; that stretch reads SKSSISSKRSSVRSDAAMSR. MORN repeat units lie at residues 281–303 and 304–326; these read YMGE…NGMK and YEGE…DGSK. Over residues 437–454 the composition is skewed to basic and acidic residues; that stretch reads NPEEKVLEKPPSPKESPH. The segment at 437–631 is disordered; sequence NPEEKVLEKP…NDTCPSLEKE (195 aa). Serine 452 carries the post-translational modification Phosphoserine. Residue threonine 461 is modified to Phosphothreonine. Serine 465, serine 469, and serine 475 each carry phosphoserine. The span at 466-477 shows a compositional bias: low complexity; it reads PESSPKQSHSPQ. Composition is skewed to basic and acidic residues over residues 562 to 571 and 598 to 612; these read PPEDREDDRG and VAKE…KKSE. Residues 639 to 659 form a helical; Anchor for type IV membrane protein membrane-spanning segment; it reads IMIVLVMLLNIGLAILFVHFL.

Belongs to the junctophilin family. In terms of tissue distribution, specifically expressed in skeletal muscle. Weakly expressed in embryos and neonates. Abundant in young adult muscles.

The protein localises to the cell membrane. It localises to the endoplasmic reticulum membrane. The protein resides in the sarcoplasmic reticulum membrane. Its function is as follows. Junctophilins contribute to the formation of junctional membrane complexes (JMCs) which link the plasma membrane with the endoplasmic or sarcoplasmic reticulum in excitable cells. Provides a structural foundation for functional cross-talk between the cell surface and intracellular calcium release channels. JPH1 contributes to the construction of the skeletal muscle triad by linking the t-tubule (transverse-tubule) and SR (sarcoplasmic reticulum) membranes. In Mus musculus (Mouse), this protein is Junctophilin-1 (Jph1).